A 466-amino-acid polypeptide reads, in one-letter code: Ribulose bisphosphate carboxylase (466 aa).

Substrate is bound at residue Asn-111. The active-site Proton acceptor is Lys-166. Lys-168 is a binding site for substrate. Lys-191, Asp-193, and Glu-194 together coordinate Mg(2+). Residue Lys-191 is modified to N6-carboxylysine. The active-site Proton acceptor is His-287. Positions 288, 321, and 368 each coordinate substrate.

Belongs to the RuBisCO large chain family. Type II subfamily. In terms of assembly, homodimer. The cofactor is Mg(2+).

The catalysed reaction is 2 (2R)-3-phosphoglycerate + 2 H(+) = D-ribulose 1,5-bisphosphate + CO2 + H2O. It carries out the reaction D-ribulose 1,5-bisphosphate + O2 = 2-phosphoglycolate + (2R)-3-phosphoglycerate + 2 H(+). Functionally, ruBisCO catalyzes two reactions: the carboxylation of D-ribulose 1,5-bisphosphate, the primary event in carbon dioxide fixation, as well as the oxidative fragmentation of the pentose substrate. Both reactions occur simultaneously and in competition at the same active site. The chain is Ribulose bisphosphate carboxylase (cbbM) from Rhodospirillum rubrum.